Reading from the N-terminus, the 64-residue chain is UPF0434 protein Bmul_0750/BMULJ_02510 (64 aa).

Belongs to the UPF0434 family.

This is UPF0434 protein Bmul_0750/BMULJ_02510 from Burkholderia multivorans (strain ATCC 17616 / 249).